The following is a 390-amino-acid chain: GTPase Obg (390 aa).

The Obg domain maps to 1 to 159; that stretch reads MKFVDEATIL…RELMLELLLL (159 aa). Residues 160 to 333 form the OBG-type G domain; sequence ADVGMLGLPN…LCWDVMNFLN (174 aa). GTP contacts are provided by residues 166–173, 191–195, 213–216, 283–286, and 314–316; these read GLPNAGKS, FTTLI, DIPG, NKID, and SAA. Mg(2+) is bound by residues S173 and T193. Acidic residues predominate over residues 363–384; the sequence is EVEAEAESEDDDDWDEEDDDGV. Positions 363–390 are disordered; the sequence is EVEAEAESEDDDDWDEEDDDGVEFIYER.

This sequence belongs to the TRAFAC class OBG-HflX-like GTPase superfamily. OBG GTPase family. In terms of assembly, monomer. Requires Mg(2+) as cofactor.

It localises to the cytoplasm. Its function is as follows. An essential GTPase which binds GTP, GDP and possibly (p)ppGpp with moderate affinity, with high nucleotide exchange rates and a fairly low GTP hydrolysis rate. Plays a role in control of the cell cycle, stress response, ribosome biogenesis and in those bacteria that undergo differentiation, in morphogenesis control. The polypeptide is GTPase Obg (Yersinia enterocolitica serotype O:8 / biotype 1B (strain NCTC 13174 / 8081)).